The following is a 160-amino-acid chain: Ureidoglycolate lyase (160 aa).

It belongs to the ureidoglycolate lyase family. As to quaternary structure, homodimer. Requires Ni(2+) as cofactor.

It carries out the reaction (S)-ureidoglycolate = urea + glyoxylate. Its pathway is nitrogen metabolism; (S)-allantoin degradation. Functionally, catalyzes the catabolism of the allantoin degradation intermediate (S)-ureidoglycolate, generating urea and glyoxylate. Involved in the utilization of allantoin as nitrogen source. The sequence is that of Ureidoglycolate lyase from Salmonella enteritidis.